We begin with the raw amino-acid sequence, 357 residues long: Glutamyl endopeptidase (357 aa).

An N-terminal signal peptide occupies residues 1–29 (MKGKFLKVSSLFVATLTTATLVSSPAANA). Residues 30 to 68 (LSSKAMDNHPQQTQTDKQQTPKIQKGGNLKPLEQRERAN) constitute a propeptide that is removed on maturation. Positions 33–58 (KAMDNHPQQTQTDKQQTPKIQKGGNL) are disordered. The span at 40–54 (QQTQTDKQQTPKIQK) shows a compositional bias: low complexity. Catalysis depends on charge relay system residues His119, Asp161, and Ser237. A disordered region spans residues 282–357 (NFANDDHPNN…NNNSDNPDAA (76 aa)). Repeat copies occupy residues 289–291 (PNN), 292–294 (PDN), 295–297 (PDN), 298–300 (PNN), 301–303 (PDN), 304–306 (PNN), 307–309 (PDN), 310–312 (PNN), 313–315 (PDN), 316–318 (PDN), 319–321 (PNN), 322–324 (PDN), 325–327 (PNN), 328–330 (PDN), 331–333 (PNN), 337–339 (PNN), 340–342 (PNN), and 343–345 (PDN). The tract at residues 289–345 (PNNPDNPDNPNNPDNPNNPDNPNNPDNPDNPNNPDNPNNPDNPNNPDQPNNPNNPDN) is 18 X 3 AA repeats of P-[DN]-N. The segment covering 291–357 (NPDNPDNPNN…NNNSDNPDAA (67 aa)) has biased composition (low complexity).

It belongs to the peptidase S1B family. Proteolytically cleaved by aureolysin (aur). This cleavage leads to the activation of SspA.

The protein resides in the secreted. It carries out the reaction Preferential cleavage: Glu-|-Xaa, Asp-|-Xaa.. Its function is as follows. Preferentially cleaves peptide bonds on the carboxyl-terminal side of aspartate and glutamate. Along with other extracellular proteases it is involved in colonization and infection of human tissues. Required for proteolytic maturation of thiol protease SspB and inactivation of SspC, an inhibitor of SspB. It is the most important protease for degradation of fibronectin-binding protein (FnBP) and surface protein A, which are involved in adherence to host cells. May also protect bacteria against host defense mechanism by cleaving the immunoglobulin classes IgG, IgA and IgM. May be involved in the stability of secreted lipases. This is Glutamyl endopeptidase (sspA) from Staphylococcus aureus (strain MRSA252).